Reading from the N-terminus, the 783-residue chain is Spindle pole body protein ppc89 (783 aa).

At S157 the chain carries Phosphoserine. Disordered stretches follow at residues 180–216 (FDSP…ETPS), 434–458 (KESN…MNEA), 471–504 (ENKS…PTSG), and 528–610 (LSQS…MKGN). Polar residues-rich tracts occupy residues 201–216 (RSKT…ETPS), 437–453 (NVTS…SKPL), and 474–504 (SGAN…PTSG). Residues 536–551 (PVKHRKRRPKSKRRIT) show a composition bias toward basic residues. Over residues 566–590 (ESDEGSEEISLDSEYSDILSDDGDF) the composition is skewed to acidic residues.

The protein resides in the cytoplasm. It is found in the cytoskeleton. Its subcellular location is the microtubule organizing center. It localises to the spindle pole body. Its function is as follows. Has a role in meiosis. This chain is Spindle pole body protein ppc89 (ppc89), found in Schizosaccharomyces pombe (strain 972 / ATCC 24843) (Fission yeast).